Consider the following 632-residue polypeptide: 2-oxoacid:ferredoxin oxidoreductase subunit alpha (632 aa).

The YPITP motif motif lies at 254–258 (YPITP). Substrate-binding residues include Thr257 and Arg345.

Heterodimer composed of an alpha and a beta subunit.

It carries out the reaction a 2-oxocarboxylate + 2 oxidized [2Fe-2S]-[ferredoxin] + CoA = an acyl-CoA + 2 reduced [2Fe-2S]-[ferredoxin] + CO2 + H(+). Its function is as follows. Catalyzes the coenzyme A-dependent oxidative decarboxylation of different 2-oxoacids such as 2-oxoglutarate, pyruvate and 2-oxobutyrate to form their CoA derivatives. The chain is 2-oxoacid:ferredoxin oxidoreductase subunit alpha from Saccharolobus solfataricus (Sulfolobus solfataricus).